The sequence spans 181 residues: MEDIHSGPATNTNPIVFFDIALGGVPLGRIKMELFADVTPRTAENFRRFCTGESKNSQGKPQGYKNSKFHRVIKDFMIQGGDFVNGDGTGSCTIYGTPKFADENFVLKHDRAGVLSMANSGPNTNGCQFFITTTATPFLNGKHVVFGQVVDGMDIVRMIENTRTIRDKPSQDVIITQCGEM.

The PPIase cyclophilin-type domain occupies 17-180 (FFDIALGGVP…QDVIITQCGE (164 aa)).

The protein belongs to the cyclophilin-type PPIase family. PPIase H subfamily.

It is found in the nucleus. It carries out the reaction [protein]-peptidylproline (omega=180) = [protein]-peptidylproline (omega=0). Functionally, PPIases accelerate the folding of proteins. It catalyzes the cis-trans isomerization of proline imidic peptide bonds in oligopeptides. This chain is Peptidyl-prolyl cis-trans isomerase H (cyp3), found in Aspergillus fumigatus (strain ATCC MYA-4609 / CBS 101355 / FGSC A1100 / Af293) (Neosartorya fumigata).